A 352-amino-acid polypeptide reads, in one-letter code: Glycerol-1-phosphate dehydrogenase [NAD(P)+] (352 aa).

Residues 91-95 and 113-116 contribute to the NAD(+) site; these read GRVID and TVAS. Asp-118 is a binding site for substrate. An NAD(+)-binding site is contributed by Ser-122. Residue Glu-169 participates in substrate binding. Residues Glu-169 and His-249 each contribute to the Zn(2+) site. His-253 is a binding site for substrate. Residue His-269 coordinates Zn(2+).

It belongs to the glycerol-1-phosphate dehydrogenase family. Homodimer. Zn(2+) serves as cofactor.

Its subcellular location is the cytoplasm. It catalyses the reaction sn-glycerol 1-phosphate + NAD(+) = dihydroxyacetone phosphate + NADH + H(+). It carries out the reaction sn-glycerol 1-phosphate + NADP(+) = dihydroxyacetone phosphate + NADPH + H(+). It participates in membrane lipid metabolism; glycerophospholipid metabolism. Functionally, catalyzes the NAD(P)H-dependent reduction of dihydroxyacetonephosphate (DHAP or glycerone phosphate) to glycerol 1-phosphate (G1P). The G1P thus generated is used as the glycerophosphate backbone of phospholipids in the cellular membranes of Archaea. This Caldivirga maquilingensis (strain ATCC 700844 / DSM 13496 / JCM 10307 / IC-167) protein is Glycerol-1-phosphate dehydrogenase [NAD(P)+].